A 508-amino-acid chain; its full sequence is Metalloprotease TIKI1 (508 aa).

An N-terminal signal peptide occupies residues 1–23 (MVIIWNIFLPAFLLVLAKASLRS). Topologically, residues 24–485 (SRDSANCKLN…KYIKAAQSVS (462 aa)) are extracellular. 4 N-linked (GlcNAc...) asparagine glycosylation sites follow: asparagine 219, asparagine 228, asparagine 277, and asparagine 335. Residues 486 to 506 (FSLSIPSAFLLLAWCFQQVAV) form a helical membrane-spanning segment. Topologically, residues 507–508 (LQ) are cytoplasmic.

It belongs to the TIKI family. Mn(2+) is required as a cofactor. Requires Co(2+) as cofactor. As to expression, zygotically expressed in the Spemann-Mangold organizer, in particular in the head Spemann-Mangold organizer region responsible for anterior patterning.

The protein resides in the cell membrane. Functionally, metalloprotease that acts as a negative regulator of the Wnt signaling pathway: expressed in the Spemann-Mangold organizer and is required for anterior-neural patterning in head formation in embryos. Acts by mediating the cleavage of the N-terminal residues of a subset of Wnt proteins. Following cleavage, Wnt proteins become oxidized and form large disulfide-bond oligomers, leading to their inactivation. Able to cleave wnt8. This Xenopus tropicalis (Western clawed frog) protein is Metalloprotease TIKI1 (trabd2a).